The sequence spans 843 residues: Glycogen phosphorylase, brain form (843 aa).

Residue alanine 2 is modified to N-acetylalanine. At serine 15 the chain carries Phosphoserine; by PHK; in form phosphorylase A. AMP-binding residues include aspartate 43, tyrosine 197, and arginine 310. Tyrosine 197 carries the post-translational modification Phosphotyrosine. Phosphotyrosine is present on tyrosine 473. Serine 524 carries the post-translational modification Phosphoserine. Lysine 569 serves as a coordination point for pyridoxal 5'-phosphate. The tract at residues 677–678 is pyridoxal 5'-phosphate; it reads TG. Lysine 681 carries the N6-(pyridoxal phosphate)lysine modification.

It belongs to the glycogen phosphorylase family. As to quaternary structure, homodimer. Dimers associate into a tetramer to form the enzymatically active phosphorylase A. The cofactor is pyridoxal 5'-phosphate. In terms of processing, phosphorylation of Ser-15 converts phosphorylase B (unphosphorylated) to phosphorylase A.

It catalyses the reaction [(1-&gt;4)-alpha-D-glucosyl](n) + phosphate = [(1-&gt;4)-alpha-D-glucosyl](n-1) + alpha-D-glucose 1-phosphate. Activity of phosphorylase is controlled both by allosteric means (through the non-covalent binding of metabolites) and by covalent modification. Thus AMP allosterically activates, whereas ATP, ADP, and glucose-6-phosphate allosterically inhibit, phosphorylase B. In terms of biological role, glycogen phosphorylase that regulates glycogen mobilization. Phosphorylase is an important allosteric enzyme in carbohydrate metabolism. Enzymes from different sources differ in their regulatory mechanisms and in their natural substrates. However, all known phosphorylases share catalytic and structural properties. The sequence is that of Glycogen phosphorylase, brain form (Pygb) from Mus musculus (Mouse).